Reading from the N-terminus, the 331-residue chain is Peroxidase 60 (331 aa).

Residues 1–26 (MAVKISTIEVLILSLALLSFGHGCYG) form the signal peptide. Cystine bridges form between Cys-37–Cys-113, Cys-70–Cys-75, Cys-119–Cys-321, and Cys-198–Cys-230. Residue His-68 is the Proton acceptor of the active site. Ca(2+)-binding residues include Asp-69, Gly-74, Asp-76, and Ser-78. Pro-161 is a substrate binding site. His-191 serves as a coordination point for heme b. Ca(2+) is bound at residue Thr-192. Asn-245 carries an N-linked (GlcNAc...) asparagine glycan. Positions 248 and 253 each coordinate Ca(2+).

Belongs to the peroxidase family. Classical plant (class III) peroxidase subfamily. It depends on heme b as a cofactor. Ca(2+) is required as a cofactor. In terms of tissue distribution, expressed in roots, slightly in leaves.

It is found in the secreted. The catalysed reaction is 2 a phenolic donor + H2O2 = 2 a phenolic radical donor + 2 H2O. Functionally, removal of H(2)O(2), oxidation of toxic reductants, biosynthesis and degradation of lignin, suberization, auxin catabolism, response to environmental stresses such as wounding, pathogen attack and oxidative stress. These functions might be dependent on each isozyme/isoform in each plant tissue. The polypeptide is Peroxidase 60 (PER60) (Arabidopsis thaliana (Mouse-ear cress)).